We begin with the raw amino-acid sequence, 465 residues long: Argininosuccinate lyase (465 aa).

The protein belongs to the lyase 1 family. Argininosuccinate lyase subfamily.

Its subcellular location is the cytoplasm. It carries out the reaction 2-(N(omega)-L-arginino)succinate = fumarate + L-arginine. It participates in amino-acid biosynthesis; L-arginine biosynthesis; L-arginine from L-ornithine and carbamoyl phosphate: step 3/3. This is Argininosuccinate lyase from Aromatoleum aromaticum (strain DSM 19018 / LMG 30748 / EbN1) (Azoarcus sp. (strain EbN1)).